The chain runs to 533 residues: Di/tripeptide-binding protein 3 (533 aa).

An N-terminal signal peptide occupies residues 1-24 (MRKILPLRAWLAAGLILGSPFSHA).

The protein belongs to the bacterial solute-binding protein 5 family. As to quaternary structure, the complex is composed of two ATP-binding proteins (DppD and DppF), two transmembrane proteins (DppB and DppC) and a solute-binding protein (DppA3). Five orthologous SBPs (DppA1-A5) are present in P.aeruginosa, which increases the substrate specificity of the DppBCDF transporter.

Its function is as follows. Part of the ABC transporter DppABCDF involved in the uptake of various di/tripeptides. Prefers dipeptides with acidic residues at the C-terminal end. Involved in the uptake of phaseolotoxin, a toxic tripeptide inhibiting the enzyme ornithine carbamoyltransferase. This chain is Di/tripeptide-binding protein 3, found in Pseudomonas aeruginosa (strain UCBPP-PA14).